The sequence spans 38 residues: Beta-galactosidase (38 aa).

The protein belongs to the glycosyl hydrolase 35 family. Heterodimer of a large and a small subunit. The small subunit is N-glycosylated.

The catalysed reaction is Hydrolysis of terminal non-reducing beta-D-galactose residues in beta-D-galactosides.. Its function is as follows. Involved in cell wall degradation. Degrades polysaccharides containing beta-(1--&gt;4)-linked galactans, acting as an exo-(1--&gt;4)-beta-D-galactanase. This chain is Beta-galactosidase, found in Hordeum vulgare (Barley).